A 265-amino-acid polypeptide reads, in one-letter code: Histone H1 (265 aa).

A compositionally biased stretch (low complexity) spans 1-27 (MATEEPIVAVETVPEPIVTEPTTITEP). Disordered regions lie at residues 1–66 (MATE…PTYE), 131–226 (AAKK…TTPG), and 242–265 (VKSVKAKSVKSPVKKVSVKRGGRK). Over residues 29-42 (VPEKEEPKAEVEKT) the composition is skewed to basic and acidic residues. The segment covering 43 to 55 (KKAKGSKPKKASK) has biased composition (basic residues). In terms of domain architecture, H15 spans 61–130 (SHPTYEEMIK…KVKGSFKLSA (70 aa)). A compositionally biased stretch (basic residues) spans 140–171 (PKAKTAAKAKSVKAKPAAKPKAKAVVKPKVAS). The span at 186 to 202 (KPKTVAAKTKPTAAKPK) shows a compositional bias: low complexity. The segment covering 203 to 215 (AVVKPKSKVKPAK) has biased composition (basic residues). The span at 216-226 (VAKTSVKTTPG) shows a compositional bias: low complexity.

The protein belongs to the histone H1/H5 family.

The protein resides in the nucleus. The protein localises to the chromosome. Its function is as follows. Histones H1 are necessary for the condensation of nucleosome chains into higher-order structures. In Pisum sativum (Garden pea), this protein is Histone H1.